A 158-amino-acid polypeptide reads, in one-letter code: NAD(P)H-quinone oxidoreductase subunit J, chloroplastic (158 aa).

This sequence belongs to the complex I 30 kDa subunit family. NDH is composed of at least 16 different subunits, 5 of which are encoded in the nucleus.

Its subcellular location is the plastid. It localises to the chloroplast thylakoid membrane. It carries out the reaction a plastoquinone + NADH + (n+1) H(+)(in) = a plastoquinol + NAD(+) + n H(+)(out). The enzyme catalyses a plastoquinone + NADPH + (n+1) H(+)(in) = a plastoquinol + NADP(+) + n H(+)(out). In terms of biological role, NDH shuttles electrons from NAD(P)H:plastoquinone, via FMN and iron-sulfur (Fe-S) centers, to quinones in the photosynthetic chain and possibly in a chloroplast respiratory chain. The immediate electron acceptor for the enzyme in this species is believed to be plastoquinone. Couples the redox reaction to proton translocation, and thus conserves the redox energy in a proton gradient. In Nuphar advena (Common spatterdock), this protein is NAD(P)H-quinone oxidoreductase subunit J, chloroplastic.